Reading from the N-terminus, the 128-residue chain is MSNVPAELKYTKSHEWIRVEADGSLTIGVTDHAQEALGDVVFLELPEAGRQLAAGEACAVIESVKAASDIYAPVDGEVIASNQDAVDAPESVNADAYAAWLFKLKPANAGDVAALLDAQGYQAEIANA.

The region spanning 24-105 is the Lipoyl-binding domain; it reads SLTIGVTDHA…AYAAWLFKLK (82 aa). The residue at position 65 (K65) is an N6-lipoyllysine.

This sequence belongs to the GcvH family. The glycine cleavage system is composed of four proteins: P, T, L and H. The cofactor is (R)-lipoate.

The glycine cleavage system catalyzes the degradation of glycine. The H protein shuttles the methylamine group of glycine from the P protein to the T protein. In Aromatoleum aromaticum (strain DSM 19018 / LMG 30748 / EbN1) (Azoarcus sp. (strain EbN1)), this protein is Glycine cleavage system H protein.